The chain runs to 608 residues: MCGIVGIVGHKPVSERLIEALGRLEYRGYDSSGVATIFEGELHRRRAEGKLGNLKTRLKEAPLSGTVGIAHTRWATHGAPTECNAHPHFTDGVAVVHNGIIENFSKLKDALAEVGTKFQTDTDTEVIAHLLTKFRRDGMGCLEAMHAMLKCVEGAFALAILFEDDPATIMVARNGPPLVIGHGDGEMFLGSDAIALAPFTNDITYLNDGDWAVVGKTSVQVFDIEGNVVTRPRHISLATADLVGKGNHPHFMEKEIYEQPEVIARALGHYINVNDSHVTTTSTDIDFAGVESLAISACGTAYLAGLIGKYWFERYARLIVEIDVASEFRYREIPLSPRSAALFISQSGETADTLASLRYCKAHGLRIGAVVNTRESTMAREADAIFPILAGPEIGVASTKAFTCQLAVLAALRIGAGKARGTITDDEEQVLVQSLATLPGVMRQVLNDITPEIELLSRELSHYRDVLYLGRGTSFPLAMEGALKLKEVSYIHAEGYAAGELKHGPIALIDENMPVIVIAPHDRFFDKTVSNMQEVAARGGRIILITDETGASMSKLPTMHTIVLPDVAEIIAPMIFSLPLQLLAYHTAVVMGADVDQPRNLAKSVTVE.

The Nucleophile; for GATase activity role is filled by Cys2. The Glutamine amidotransferase type-2 domain maps to 2–217 (CGIVGIVGHK…DGDWAVVGKT (216 aa)). SIS domains are found at residues 283-422 (TDID…ARGT) and 456-598 (LSRE…VDQP). The For Fru-6P isomerization activity role is filled by Lys603.

Its subcellular location is the cytoplasm. It catalyses the reaction D-fructose 6-phosphate + L-glutamine = D-glucosamine 6-phosphate + L-glutamate. In terms of biological role, involved in the production of the root hair deformation (HAD) factor specifically on medicago. This chain is Glutamine--fructose-6-phosphate aminotransferase [isomerizing] (nodM), found in Rhizobium leguminosarum bv. viciae.